Here is a 754-residue protein sequence, read N- to C-terminus: Leucine-rich repeat-containing protein 36 (754 aa).

2 LRR repeats span residues 51–72 (NLRSLDLSRNLITSLKGIQYLC) and 73–94 (SLQDLNLYYNNIPSLVEVSRLQ). One can recognise an LRRCT domain in the interval 107–146 (NPVVRKDTDYRLFAVYTLQTLEKLDDRTVREGERKAAKLH). Positions 241 to 255 (REMPSDNHQEDEFRH) are enriched in basic and acidic residues. A disordered region spans residues 241 to 270 (REMPSDNHQEDEFRHYSPRQSTVRSPEKMT). Residues 600 to 680 (NDMESLKQKL…EKTVAILHES (81 aa)) adopt a coiled-coil conformation. A disordered region spans residues 702–734 (YSGKALLPPEKGHHLGRSSPFGKSTLSSSSPVA). Residues 722–732 (FGKSTLSSSSP) are compositionally biased toward polar residues.

This Homo sapiens (Human) protein is Leucine-rich repeat-containing protein 36 (LRRC36).